A 124-amino-acid chain; its full sequence is Large ribosomal subunit protein bL12 (124 aa).

It belongs to the bacterial ribosomal protein bL12 family. As to quaternary structure, homodimer. Part of the ribosomal stalk of the 50S ribosomal subunit. Forms a multimeric L10(L12)X complex, where L10 forms an elongated spine to which 2 to 4 L12 dimers bind in a sequential fashion. Binds GTP-bound translation factors.

Forms part of the ribosomal stalk which helps the ribosome interact with GTP-bound translation factors. Is thus essential for accurate translation. This Burkholderia lata (strain ATCC 17760 / DSM 23089 / LMG 22485 / NCIMB 9086 / R18194 / 383) protein is Large ribosomal subunit protein bL12.